A 634-amino-acid chain; its full sequence is DNA-directed RNA polymerase subunit gamma (634 aa).

C74, C76, C89, and C92 together coordinate Zn(2+). Mg(2+) is bound by residues D471, D473, and D475.

This sequence belongs to the RNA polymerase beta' chain family. RpoC1 subfamily. In cyanobacteria the RNAP catalytic core is composed of 2 alpha, 1 beta, 1 beta', 1 gamma and 1 omega subunit. When a sigma factor is associated with the core the holoenzyme is formed, which can initiate transcription. Mg(2+) is required as a cofactor. Requires Zn(2+) as cofactor.

It carries out the reaction RNA(n) + a ribonucleoside 5'-triphosphate = RNA(n+1) + diphosphate. DNA-dependent RNA polymerase catalyzes the transcription of DNA into RNA using the four ribonucleoside triphosphates as substrates. The sequence is that of DNA-directed RNA polymerase subunit gamma from Synechococcus sp. (strain WH7803).